The primary structure comprises 425 residues: Divalent metal cation transporter MntH (425 aa).

11 helical membrane passes run 30–50 (LLPF…PGNF), 61–81 (GYML…IQSL), 107–127 (IGLW…EFIG), 134–154 (LLFG…SFAI), 167–187 (AGIA…TFFA), 209–231 (VLLA…HSAL), 255–275 (ILIA…VAAA), 294–314 (FGHL…LVAG), 344–364 (FITI…TTAL), 365–385 (VLSQ…LIMF), and 401–421 (ITVV…FLIV).

It belongs to the NRAMP family.

The protein localises to the cell membrane. In terms of biological role, h(+)-stimulated, divalent metal cation uptake system. Involved in manganese uptake. Can probably also transport cadmium, cobalt, copper and zinc, but not iron. May be the predominant transporter of manganese during logarithmic phase growth. In Bacillus subtilis (strain 168), this protein is Divalent metal cation transporter MntH.